Consider the following 201-residue polypeptide: 3-isopropylmalate dehydratase small subunit (201 aa).

Belongs to the LeuD family. LeuD type 1 subfamily. Heterodimer of LeuC and LeuD.

It carries out the reaction (2R,3S)-3-isopropylmalate = (2S)-2-isopropylmalate. It participates in amino-acid biosynthesis; L-leucine biosynthesis; L-leucine from 3-methyl-2-oxobutanoate: step 2/4. Functionally, catalyzes the isomerization between 2-isopropylmalate and 3-isopropylmalate, via the formation of 2-isopropylmaleate. This is 3-isopropylmalate dehydratase small subunit from Azorhizobium caulinodans (strain ATCC 43989 / DSM 5975 / JCM 20966 / LMG 6465 / NBRC 14845 / NCIMB 13405 / ORS 571).